The chain runs to 114 residues: UPF0342 protein LCA_0622 (114 aa).

Belongs to the UPF0342 family.

In Latilactobacillus sakei subsp. sakei (strain 23K) (Lactobacillus sakei subsp. sakei), this protein is UPF0342 protein LCA_0622.